A 577-amino-acid chain; its full sequence is MNIQALLSEKVSQAMIAAGAPADCEPQVRQSAKVQFGDYQANGMMAVAKKLGMAPRQLAEQVLTHLDLSGIASKVEIAGPGFINIFLEPAFLAEQVQQALTSDRLGVSQPTRQTIVVDYSAPNVAKEMHVGHLRSTIIGDAAVRTLEFLGHHVIRANHVGDWGTQFGMLIAWLEKQQQENAGDMALADLEGFYRDAKKHYDEDETFAERARNYVVKLQSGDTYFREMWRKLVDITMTQNQITYDRLNVTLTRDDVMGESLYNPMLPGIVADLKAKGLAVESEGATVVFLDEFKNKEGDPMGVIIQKKDGGYLYTTTDIACAKYRYETLHADRVLYYIDSRQHQHLMQAWTIVRKAGYVPDSVPLEHHMFGMMLGKDGKPFKTRTGGTVKLADLLDEALERARRLVAEKNPDMPADELEKLANAVGIGAVKYADLSKNRTTDYIFDWDNMLAFEGNTAPYMQYAYTRVLSVFRKADIDEQALASAPVIISEDREAQLAARLLQFEETLTVVAREGTPHVMCAYLYDVAGLFSGFYEHCPILSAENDAVRNSRLKLAQLTAKTLKLGLDTLGIETVERM.

A 'HIGH' region motif is present at residues 124–132; that stretch reads VAKEMHVGH.

Belongs to the class-I aminoacyl-tRNA synthetase family. As to quaternary structure, monomer.

It is found in the cytoplasm. It carries out the reaction tRNA(Arg) + L-arginine + ATP = L-arginyl-tRNA(Arg) + AMP + diphosphate. The polypeptide is Arginine--tRNA ligase (Salmonella typhi).